A 294-amino-acid polypeptide reads, in one-letter code: Glyceraldehyde-3-phosphate dehydrogenase (294 aa).

NAD(+) contacts are provided by Asp19, Lys63, and Thr105. D-glyceraldehyde 3-phosphate contacts are provided by residues 134-136 (SCT), Thr165, 194-195 (TG), and Arg217. Catalysis depends on Cys135, which acts as the Nucleophile.

It belongs to the glyceraldehyde-3-phosphate dehydrogenase family. In terms of assembly, homotetramer.

The protein resides in the cytoplasm. The catalysed reaction is D-glyceraldehyde 3-phosphate + phosphate + NAD(+) = (2R)-3-phospho-glyceroyl phosphate + NADH + H(+). The protein operates within carbohydrate degradation; glycolysis; pyruvate from D-glyceraldehyde 3-phosphate: step 1/5. Its function is as follows. Catalyzes the oxidative phosphorylation of glyceraldehyde 3-phosphate (G3P) to 1,3-bisphosphoglycerate (BPG) using the cofactor NAD. The first reaction step involves the formation of a hemiacetal intermediate between G3P and a cysteine residue, and this hemiacetal intermediate is then oxidized to a thioester, with concomitant reduction of NAD to NADH. The reduced NADH is then exchanged with the second NAD, and the thioester is attacked by a nucleophilic inorganic phosphate to produce BPG. The sequence is that of Glyceraldehyde-3-phosphate dehydrogenase (gap) from Klebsiella aerogenes (Enterobacter aerogenes).